The following is a 1415-amino-acid chain: Bridge-like lipid transfer protein family member 3B (1415 aa).

Positions 3-94 constitute a Chorein N-terminal domain; it reads GLIKKQILKH…DKVIMEMSTC (92 aa). 2 disordered regions span residues 267 to 300 and 882 to 904; these read STEQ…STTP and KSPL…SEGV. The span at 275-300 shows a compositional bias: polar residues; the sequence is ASETTQSPTPPVSSQQVKNPQTSTTP. Positions 1367-1404 form a coiled coil; the sequence is KAAGISKEQLVEENECLKQELAKTKMALAESHMERDRL.

Its subcellular location is the cytoplasm. It localises to the cytosol. The protein localises to the early endosome. Functionally, tube-forming lipid transport protein which mediates the transfer of lipids between membranes at organelle contact sites. Required for retrograde traffic of vesicle clusters in the early endocytic pathway to the Golgi complex. The sequence is that of Bridge-like lipid transfer protein family member 3B (bltp3b) from Xenopus laevis (African clawed frog).